The primary structure comprises 361 residues: NudC domain-containing protein 3 (361 aa).

A compositionally biased stretch (basic and acidic residues) spans 87-97 (KIRRKEEEEAK). The interval 87 to 106 (KIRRKEEEEAKTVSAAAAEK) is disordered. Ser146 carries the post-translational modification Phosphoserine. In terms of domain architecture, CS spans 185-277 (AVRENYTWSQ…VGEYWWNAIL (93 aa)). A phosphoserine mark is found at Ser340 and Ser355.

This chain is NudC domain-containing protein 3 (NUDCD3), found in Pongo abelii (Sumatran orangutan).